Here is a 644-residue protein sequence, read N- to C-terminus: MIRIRFGMDVLLVVLLATCLLTPAHGTPLEWDFAVTLRTKIQFMDSSWQTIATAAHEFDELSALTFDESEELIYFNDLKHRNGSIFSLKRDLIAANHVAEQTIARTGNESVGGLAYDPLNMNLFWSDTEQRKIFFAPIHGSVTPKVLVDLSAEGGRPDGVAVDVCRRKLYWTNSNVTHPTVERINLDGSNRTVIINSDIDMPRGIVVDQLSDRLFWIDDLKGVFFSVESCKLDGSDRQVVLKDKHHEPLNLAVTNDAIYWTDRTTRAVWSHPKVPVIKVTTTSKPEEEDSTDSTDFKDPEPVAEDCPLVRVANLSEEARGIVVRTGFYQRLQKDHHCASIVRKVKERVVEQNRKFEIRSMLDQKIKVLEDERCMNGGEYRAATDLCICPTGFKGSRCEIRECHNYCVHGTCQMSELAYPKCYCQPGFTGERCELSVCSGLCLNGGHCRVSKDENEAPSCECPAKFGGARCEQNSTEICSLFCRLLKHEPEMYVPFGCHSICEELAQDNSTNIAVPQYEHLEVCLTPRVWTSSVIIILVVGIVSSLLLVAVIVHGIRRLYKPKRPRIRKTFVVRKQARTNSAGDTPLTNRPLATEQCEITIENCCNMNICETPCFDPKLVEQTLSKSSCKEDKKILIHNMEDDLY.

Residues 1 to 26 (MIRIRFGMDVLLVVLLATCLLTPAHG) form the signal peptide. The Extracellular portion of the chain corresponds to 27–531 (TPLEWDFAVT…VCLTPRVWTS (505 aa)). N-linked (GlcNAc...) asparagine glycosylation is found at asparagine 82 and asparagine 108. LDL-receptor class B repeat units lie at residues 121-166 (MNLF…DVCR), 167-211 (RKLY…DQLS), and 212-257 (DRLF…TNDA). 2 N-linked (GlcNAc...) asparagine glycosylation sites follow: asparagine 175 and asparagine 190. The N-linked (GlcNAc...) asparagine glycan is linked to asparagine 313. EGF-like domains lie at 398–430 (EIRECHNYCVHGTCQMSELAYPKCYCQPGFTGE) and 433–471 (ELSVCSGLCLNGGHCRVSKDENEAPSCECPAKFGGARCE). Intrachain disulfides connect cysteine 402–cysteine 411, cysteine 406–cysteine 421, cysteine 437–cysteine 447, cysteine 441–cysteine 459, and cysteine 461–cysteine 470. 2 N-linked (GlcNAc...) asparagine glycosylation sites follow: asparagine 473 and asparagine 508. Residues 532-552 (SVIIILVVGIVSSLLLVAVIV) traverse the membrane as a helical segment. Residues 553-644 (HGIRRLYKPK…LIHNMEDDLY (92 aa)) are Cytoplasmic-facing.

Belongs to the cueball family.

It is found in the cell membrane. Functionally, has a role in spermatogenesis and oogenesis. The polypeptide is Protein cueball (Drosophila simulans (Fruit fly)).